A 130-amino-acid polypeptide reads, in one-letter code: Methylglyoxal synthase (130 aa).

Residues 1 to 130 (MSTPRIALIA…DLARRLPVKA (130 aa)) form the MGS-like domain. Substrate is bound by residues H11, K15, 37–40 (TGTT), and 57–58 (SG). The active-site Proton donor/acceptor is D63. H90 is a substrate binding site.

This sequence belongs to the methylglyoxal synthase family.

The enzyme catalyses dihydroxyacetone phosphate = methylglyoxal + phosphate. Catalyzes the formation of methylglyoxal from dihydroxyacetone phosphate. This chain is Methylglyoxal synthase, found in Burkholderia thailandensis (strain ATCC 700388 / DSM 13276 / CCUG 48851 / CIP 106301 / E264).